A 505-amino-acid chain; its full sequence is ATP synthase subunit alpha (505 aa).

169-176 (GDRKTGKT) is a binding site for ATP.

Belongs to the ATPase alpha/beta chains family. As to quaternary structure, F-type ATPases have 2 components, CF(1) - the catalytic core - and CF(0) - the membrane proton channel. CF(1) has five subunits: alpha(3), beta(3), gamma(1), delta(1), epsilon(1). CF(0) has three main subunits: a(1), b(2) and c(9-12). The alpha and beta chains form an alternating ring which encloses part of the gamma chain. CF(1) is attached to CF(0) by a central stalk formed by the gamma and epsilon chains, while a peripheral stalk is formed by the delta and b chains.

It localises to the cell membrane. It catalyses the reaction ATP + H2O + 4 H(+)(in) = ADP + phosphate + 5 H(+)(out). Produces ATP from ADP in the presence of a proton gradient across the membrane. The alpha chain is a regulatory subunit. This is ATP synthase subunit alpha from Leuconostoc mesenteroides subsp. mesenteroides (strain ATCC 8293 / DSM 20343 / BCRC 11652 / CCM 1803 / JCM 6124 / NCDO 523 / NBRC 100496 / NCIMB 8023 / NCTC 12954 / NRRL B-1118 / 37Y).